The sequence spans 161 residues: Small heat shock protein hspJ (161 aa).

Residues 52–161 (SKFTSLNPKL…FEKEIKINIE (110 aa)) enclose the sHSP domain.

This sequence belongs to the small heat shock protein (HSP20) family.

The polypeptide is Small heat shock protein hspJ (hspJ) (Dictyostelium discoideum (Social amoeba)).